The following is a 418-amino-acid chain: Zinc finger protein 566 (418 aa).

The 72-residue stretch at 6-77 folds into the KRAB domain; the sequence is VMFSDVSVDF…DRELTRGQWP (72 aa). Residues 169–193 form a C2H2-type 1; degenerate zinc finger; it reads KFCASKEYRKTFRHGSQFATHEIIH. 7 C2H2-type zinc fingers span residues 199 to 221, 227 to 249, 255 to 277, 283 to 305, 311 to 333, 339 to 361, and 367 to 389; these read YECK…QKIH, FECK…HRIH, YECK…QRIH, and YECK…HRIH. Residues K314 and K328 each participate in a glycyl lysine isopeptide (Lys-Gly) (interchain with G-Cter in SUMO2) cross-link.

This sequence belongs to the krueppel C2H2-type zinc-finger protein family.

It is found in the nucleus. In terms of biological role, may be involved in transcriptional regulation. In Homo sapiens (Human), this protein is Zinc finger protein 566 (ZNF566).